The chain runs to 222 residues: Ktr system potassium uptake protein A (222 aa).

The 117-residue stretch at 6–122 (NKQFAVIGLG…LEKIGADRII (117 aa)) folds into the RCK N-terminal domain. NAD(+) contacts are provided by residues arginine 16, 36 to 38 (DIN), 56 to 57 (NA), 78 to 80 (IGA), 103 to 105 (KAQ), histidine 109, and glutamate 125. In terms of domain architecture, RCK C-terminal spans 139-222 (ENVLNYIDLS…DIKRFENEGM (84 aa)).

This sequence belongs to the KtrA potassium transport family. As to quaternary structure, homodimer, tetramer (dimer of homodimer) and octamer (tetramer of homodimer). Part of the KtrAB complex formed by an octameric catalytic ring of KtrA and a membrane associated dimer of KtrB forming a potassium channel.

It localises to the cell membrane. Functionally, catalytic subunit of the KtrAB potassium uptake transporter. The 2 major potassium transporter complexes KtrAB and KtrCD confer resistance to both suddenly imposed and prolonged osmotic stress. The sequence is that of Ktr system potassium uptake protein A (ktrA) from Bacillus subtilis (strain 168).